Here is a 476-residue protein sequence, read N- to C-terminus: Aspartyl/glutamyl-tRNA(Asn/Gln) amidotransferase subunit B (476 aa).

This sequence belongs to the GatB/GatE family. GatB subfamily. Heterotrimer of A, B and C subunits.

It catalyses the reaction L-glutamyl-tRNA(Gln) + L-glutamine + ATP + H2O = L-glutaminyl-tRNA(Gln) + L-glutamate + ADP + phosphate + H(+). The catalysed reaction is L-aspartyl-tRNA(Asn) + L-glutamine + ATP + H2O = L-asparaginyl-tRNA(Asn) + L-glutamate + ADP + phosphate + 2 H(+). In terms of biological role, allows the formation of correctly charged Asn-tRNA(Asn) or Gln-tRNA(Gln) through the transamidation of misacylated Asp-tRNA(Asn) or Glu-tRNA(Gln) in organisms which lack either or both of asparaginyl-tRNA or glutaminyl-tRNA synthetases. The reaction takes place in the presence of glutamine and ATP through an activated phospho-Asp-tRNA(Asn) or phospho-Glu-tRNA(Gln). The chain is Aspartyl/glutamyl-tRNA(Asn/Gln) amidotransferase subunit B from Lactobacillus helveticus (strain DPC 4571).